Consider the following 195-residue polypeptide: Archaetidylinositol phosphate synthase (195 aa).

The next 2 helical transmembrane spans lie at 27-47 and 54-74; these read IALP…AASA and LITG…DGAV. Asp68, Asp71, Asp89, and Asp93 together coordinate Mg(2+). Asp93 acts as the Proton acceptor in catalysis. 2 helical membrane passes run 99–119 and 158–178; these read IIII…LLAL and LAGY…LAAL.

This sequence belongs to the CDP-alcohol phosphatidyltransferase class-I family. Mn(2+) is required as a cofactor. The cofactor is Mg(2+).

Its subcellular location is the cell membrane. The enzyme catalyses CDP-2,3-bis-O-(phytanyl)-sn-glycerol + 1D-myo-inositol 3-phosphate = saturated 1-archaetidyl-1D-myo-inositol 3-phosphate + CMP + H(+). Its pathway is lipid metabolism; phospholipid metabolism. Functionally, catalyzes the formation of archaetidylinositol phosphate (AIP) from CDP-archaeol (CDP-ArOH or CDP-2,3-bis-(O-phytanyl)-sn-glycerol) and 1L-myo-inositol 1-phosphate (IP or 1D-myo-inositol 3-phosphate). AIP is a precursor of archaetidyl-myo-inositol (AI), an ether-type inositol phospholipid ubiquitously distributed in archaea membranes and essential for glycolipid biosynthesis in archaea. This is Archaetidylinositol phosphate synthase from Methanothermobacter thermautotrophicus (strain ATCC 29096 / DSM 1053 / JCM 10044 / NBRC 100330 / Delta H) (Methanobacterium thermoautotrophicum).